A 148-amino-acid polypeptide reads, in one-letter code: UPF0179 protein Mevan_0979 (148 aa).

The protein belongs to the UPF0179 family.

The polypeptide is UPF0179 protein Mevan_0979 (Methanococcus vannielii (strain ATCC 35089 / DSM 1224 / JCM 13029 / OCM 148 / SB)).